The following is an 85-amino-acid chain: Toxin BmKaTX15 (85 aa).

An N-terminal signal peptide occupies residues 1–19; it reads MNYLVFFSLALLVMTGVES. The LCN-type CS-alpha/beta domain occupies 21–83; sequence RDGYIADDKN…VPIRVPGKCN (63 aa). Intrachain disulfides connect cysteine 31-cysteine 82, cysteine 35-cysteine 55, cysteine 41-cysteine 65, and cysteine 45-cysteine 67.

The protein belongs to the long (4 C-C) scorpion toxin superfamily. Sodium channel inhibitor family. Alpha subfamily. In terms of tissue distribution, expressed by the venom gland.

The protein resides in the secreted. Alpha toxins bind voltage-independently at site-3 of sodium channels (Nav) and inhibit the inactivation of the activated channels, thereby blocking neuronal transmission. This is Toxin BmKaTX15 from Olivierus martensii (Manchurian scorpion).